The chain runs to 217 residues: Protein-L-isoaspartate O-methyltransferase (217 aa).

The active site involves Ser-67.

The protein belongs to the methyltransferase superfamily. L-isoaspartyl/D-aspartyl protein methyltransferase family.

Its subcellular location is the cytoplasm. It catalyses the reaction [protein]-L-isoaspartate + S-adenosyl-L-methionine = [protein]-L-isoaspartate alpha-methyl ester + S-adenosyl-L-homocysteine. Its function is as follows. Catalyzes the methyl esterification of L-isoaspartyl residues in peptides and proteins that result from spontaneous decomposition of normal L-aspartyl and L-asparaginyl residues. It plays a role in the repair and/or degradation of damaged proteins. The protein is Protein-L-isoaspartate O-methyltransferase of Azoarcus sp. (strain BH72).